A 179-amino-acid polypeptide reads, in one-letter code: Centromere protein R (179 aa).

Positions 1–79 (MSAKRSLKLD…RLSRRGQPQT (79 aa)) are disordered. Over residues 30 to 50 (NSYSPTTGTCQISPFSSPTSH) the composition is skewed to polar residues. Basic and acidic residues predominate over residues 51–64 (NAEDLRNGLSHGDE). Positions 172-176 (LQLLL) match the LXXLL motif motif.

The protein localises to the nucleus. Its subcellular location is the chromosome. It is found in the centromere. It localises to the kinetochore. In terms of biological role, transcription coregulator that can have both coactivator and corepressor functions. Involved in the coactivation of nuclear receptors for retinoid X (RXRs) and thyroid hormone (TRs) in a ligand-dependent fashion. Probable component of a centromeric complex involved in assembly of kinetochore proteins, mitotic progression and chromosome segregation. This is Centromere protein R (CENPR) from Gallus gallus (Chicken).